Reading from the N-terminus, the 257-residue chain is UPF0246 protein Ent638_0568 (257 aa).

The protein belongs to the UPF0246 family.

This chain is UPF0246 protein Ent638_0568, found in Enterobacter sp. (strain 638).